The following is a 601-amino-acid chain: MPVKGRIIRVAGPLVVAEGMEGIQMYEMVEVGEERLIGEVNRVVGDKAYIQVYESTTGLKPGEPVYGTGSPLSVELGPGLIGRIYDGIQRPLDVIREVTKSIFVRRGVKVDALDRSRKWHFKPNTTLKPGDKVSGGDVLGEVQETSLITHKVLVPPDVHGRLKWLASEGDYTVEDVIAVVEADGKEIELKMYHRWPVRRARPIIEKLEPVEPLITGMRVIDTMFPMAKGGTGAIPGPFGSGKTVTLQSLAKWSAAKVVIYIGCGERGNEMTEVLETFPKLTDPWTGKPMMERTILIANTSNMPVAAREASIYTGITLAEYYRDMGYDVLLVADSTSRWAEALREIAGRLEEMPAEEGYPSYLASRLAEFYARAGRVKVPGRPERLGSVTIVGAVSPPGGDFTEPVTANTKRFIRVFWALDARLAYSRHYPAINWLVSYSAYVETVAKWWHENISPKWLEYRNEAYEILLREDELREIVRLVGTEGLSEKDKLILEIANIIKTGFLQQNAFDPVDAFATPQKQWKQLETIIDFYHAALEAIKRGVTVKEIREKLAPKIRELILARYNVPNDQLEKLDKLKQELLQALQELIEAKAGRASAAT.

Residue 236–243 participates in ATP binding; the sequence is GPFGSGKT.

This sequence belongs to the ATPase alpha/beta chains family. In terms of assembly, has multiple subunits with at least A(3), B(3), C, D, E, F, H, I and proteolipid K(x).

The protein resides in the cell membrane. The catalysed reaction is ATP + H2O + 4 H(+)(in) = ADP + phosphate + 5 H(+)(out). In terms of biological role, component of the A-type ATP synthase that produces ATP from ADP in the presence of a proton gradient across the membrane. The A chain is the catalytic subunit. This chain is A-type ATP synthase subunit A, found in Hyperthermus butylicus (strain DSM 5456 / JCM 9403 / PLM1-5).